The primary structure comprises 454 residues: UDP-N-acetylmuramoylalanine--D-glutamate ligase (454 aa).

Position 115-121 (115-121 (GTNGKTT)) interacts with ATP.

It belongs to the MurCDEF family.

The protein localises to the cytoplasm. The enzyme catalyses UDP-N-acetyl-alpha-D-muramoyl-L-alanine + D-glutamate + ATP = UDP-N-acetyl-alpha-D-muramoyl-L-alanyl-D-glutamate + ADP + phosphate + H(+). Its pathway is cell wall biogenesis; peptidoglycan biosynthesis. Functionally, cell wall formation. Catalyzes the addition of glutamate to the nucleotide precursor UDP-N-acetylmuramoyl-L-alanine (UMA). The chain is UDP-N-acetylmuramoylalanine--D-glutamate ligase from Thermoanaerobacter pseudethanolicus (strain ATCC 33223 / 39E) (Clostridium thermohydrosulfuricum).